The primary structure comprises 551 residues: Tetrachloroethene reductive dehalogenase (551 aa).

Residues 1 to 39 (MGEINRRNFLKASMLGAAAAAVASASAVKGMVSPLVADA) constitute a signal peptide (tat-type signal). The 30-residue stretch at 411–440 (PRKFGVREFCRLCKKCADACPAQAISHEKD) folds into the 4Fe-4S ferredoxin-type 1 domain. Residues cysteine 420, cysteine 423, cysteine 426, cysteine 430, cysteine 467, cysteine 478, cysteine 481, and cysteine 485 each coordinate [4Fe-4S] cluster. The 4Fe-4S ferredoxin-type 2 domain maps to 478–496 (CANCVAVCSWNKVETWNHD).

Belongs to the PceA family. Monomer. It depends on [4Fe-4S] cluster as a cofactor. The cofactor is corrinoid. Predicted to be exported by the Tat system. The position of the signal peptide cleavage has been experimentally proven.

It localises to the cell membrane. It carries out the reaction trichloroethene + chloride + A + H(+) = tetrachloroethene + AH2. It catalyses the reaction trichloroethene + AH2 = (Z)-1,2-dichloroethene + chloride + A + H(+). Activity is inhibited by ammonium ions. Photoreversibly inactivated by 1-iodopropane. In terms of biological role, catalyzes the reductive dechlorination of tetrachloroethene (PCE) to trichloroethene (TCE) and of trichloroethene to cis-1,2-dichloroethene (DCE). Can also use trichlorofluoroethene, tetrachloromethane, hexachloroethane, tetrachloroethane, trichloroethane and 1,1,1-trichloro-2,2,2-trifluoroethane. Menaquinone can act as the electron donor. Reduced methyl viologen can act as the artificial electron donor. The sequence is that of Tetrachloroethene reductive dehalogenase from Dehalobacter restrictus (strain DSM 9455 / PER-K23).